A 91-amino-acid chain; its full sequence is Small ribosomal subunit protein uS15 (91 aa).

This sequence belongs to the universal ribosomal protein uS15 family. As to quaternary structure, part of the 30S ribosomal subunit. Forms a bridge to the 50S subunit in the 70S ribosome, contacting the 23S rRNA.

One of the primary rRNA binding proteins, it binds directly to 16S rRNA where it helps nucleate assembly of the platform of the 30S subunit by binding and bridging several RNA helices of the 16S rRNA. In terms of biological role, forms an intersubunit bridge (bridge B4) with the 23S rRNA of the 50S subunit in the ribosome. The polypeptide is Small ribosomal subunit protein uS15 (Cytophaga hutchinsonii (strain ATCC 33406 / DSM 1761 / CIP 103989 / NBRC 15051 / NCIMB 9469 / D465)).